Reading from the N-terminus, the 467-residue chain is MAFLIHLLVCTFGMGSWVAINGLWVELPLLVTELPEGWYLPSYLTVIIQLANVGPLLVTLLHHFRPGCLSEVAVVFTVLGVGTIACTLFAFLWNVTSWVLGSRHSIAFLVLTFFLALVDCTSSVTFLPFMSRLPTYYLTTFFVGEGLSGLLPALVALAQGSGLTTCVNVTEISATTLSPETTRNMDSPQGASSTLVSKLAGTAPSGIHLESRYLPANFSPLVFFLLLSFMMACCFISFFFLQRQPKRWEASIEDLLTSQVTLNSIRPQEGKDLGPPEESGKAQDPPEEKTAPQHLAHLTFIYVLVAFVNALTNGVLPSVQTYSCLSYGPVAYHLSATLSSMASPLTCFLSIFLPNRSLPFLGVLAVLGTSFGAYNMAMAVMSPCPFMQGHWGGEVLIVVSWVLFTGCLSYVKVMLGVILRDHSRSALLWCGAAVQLGSLLGAVVMFPLVNVLRLFSSADFCSLQCSA.

The Cytoplasmic portion of the chain corresponds to 1-2 (MA). A helical transmembrane segment spans residues 3–23 (FLIHLLVCTFGMGSWVAINGL). Residues 24–43 (WVELPLLVTELPEGWYLPSY) lie on the Extracellular side of the membrane. The chain crosses the membrane as a helical span at residues 44–64 (LTVIIQLANVGPLLVTLLHHF). The Cytoplasmic portion of the chain corresponds to 65-71 (RPGCLSE). The helical transmembrane segment at 72-92 (VAVVFTVLGVGTIACTLFAFL) threads the bilayer. The Extracellular segment spans residues 93–105 (WNVTSWVLGSRHS). An N-linked (GlcNAc...) asparagine glycan is attached at Asn-94. Residues 106–126 (IAFLVLTFFLALVDCTSSVTF) form a helical membrane-spanning segment. Residues 127 to 137 (LPFMSRLPTYY) are Cytoplasmic-facing. A helical membrane pass occupies residues 138-158 (LTTFFVGEGLSGLLPALVALA). At 159 to 220 (QGSGLTTCVN…SRYLPANFSP (62 aa)) the chain is on the extracellular side. An N-linked (GlcNAc...) asparagine glycan is attached at Asn-168. Residues 221-241 (LVFFLLLSFMMACCFISFFFL) traverse the membrane as a helical segment. The Cytoplasmic portion of the chain corresponds to 242-294 (QRQPKRWEASIEDLLTSQVTLNSIRPQEGKDLGPPEESGKAQDPPEEKTAPQH). Ser-251 bears the Phosphoserine mark. The interval 266-288 (RPQEGKDLGPPEESGKAQDPPEE) is disordered. Positions 268–288 (QEGKDLGPPEESGKAQDPPEE) are enriched in basic and acidic residues. A helical transmembrane segment spans residues 295-315 (LAHLTFIYVLVAFVNALTNGV). Residues 316–333 (LPSVQTYSCLSYGPVAYH) are Extracellular-facing. A helical transmembrane segment spans residues 334-354 (LSATLSSMASPLTCFLSIFLP). Residues 355–359 (NRSLP) lie on the Cytoplasmic side of the membrane. Residues 360–380 (FLGVLAVLGTSFGAYNMAMAV) traverse the membrane as a helical segment. At 381–394 (MSPCPFMQGHWGGE) the chain is on the extracellular side. The helical transmembrane segment at 395–415 (VLIVVSWVLFTGCLSYVKVML) threads the bilayer. Over 416 to 425 (GVILRDHSRS) the chain is Cytoplasmic. A helical membrane pass occupies residues 426–446 (ALLWCGAAVQLGSLLGAVVMF). Residues 447–467 (PLVNVLRLFSSADFCSLQCSA) are Extracellular-facing.

This sequence belongs to the riboflavin transporter family.

The protein resides in the cell membrane. It catalyses the reaction riboflavin(in) = riboflavin(out). In terms of biological role, plasma membrane transporter mediating the uptake by cells of the water soluble vitamin B2/riboflavin that plays a key role in biochemical oxidation-reduction reactions of the carbohydrate, lipid, and amino acid metabolism. This is Solute carrier family 52, riboflavin transporter, member 3 (SLC52A3) from Bos taurus (Bovine).